The primary structure comprises 416 residues: Phosphoglycerate kinase (416 aa).

S2 bears the N-acetylserine mark. (2R)-3-phosphoglycerate contacts are provided by V23, D24, F25, N26, Q38, R39, S62, H63, G65, and R66. A Glycyl lysine isopeptide (Lys-Gly) (interchain with G-Cter in ubiquitin) cross-link involves residue K82. The residue at position 93 (T93) is a Phosphothreonine. Residue S110 is modified to Phosphoserine. Residues L121 and R122 each coordinate (2R)-3-phosphoglycerate. Residues S130 and S154 each carry the phosphoserine modification. H168 and R169 together coordinate (2R)-3-phosphoglycerate. S172 is subject to Phosphoserine. A Glycyl lysine isopeptide (Lys-Gly) (interchain with G-Cter in ubiquitin) cross-link involves residue K197. A Phosphothreonine modification is found at T203. G212 is a binding site for ADP. G212 is a CDP binding site. Residues A213 and K214 each contribute to the AMP site. ATP contacts are provided by A213 and K214. Mg(2+) is bound at residue A213. Mg(2+) is bound by residues A216 and D217. D217 contacts CDP. Residue K218 participates in AMP binding. Position 218 (K218) interacts with ATP. Position 236 (G236) interacts with ADP. CDP is bound at residue G236. Residue G237 participates in AMP binding. G237 contributes to the ATP binding site. Residue T241 is modified to Phosphothreonine. Residues K258 and K274 each participate in a glycyl lysine isopeptide (Lys-Gly) (interchain with G-Cter in ubiquitin) cross-link. T298 bears the Phosphothreonine mark. K302 participates in a covalent cross-link: Glycyl lysine isopeptide (Lys-Gly) (interchain with G-Cter in ubiquitin). G311 is a binding site for AMP. 2 residues coordinate ATP: G311 and L312. S318 is modified (phosphoserine). T331 carries the phosphothreonine modification. N335 contributes to the ATP binding site. Positions 336 and 341 each coordinate CDP. Residue F341 participates in ADP binding. Residue E342 coordinates AMP. E342 contacts ATP. G371 provides a ligand contact to (2R)-3-phosphoglycerate. 2 residues coordinate ATP: D373 and T374. Position 373 (D373) interacts with Mg(2+). T392 bears the Phosphothreonine mark. Residues G394 and G395 each coordinate (2R)-3-phosphoglycerate.

Belongs to the phosphoglycerate kinase family. As to quaternary structure, monomer. Mg(2+) is required as a cofactor.

It localises to the cytoplasm. The protein localises to the mitochondrion. The enzyme catalyses (2R)-3-phosphoglycerate + ATP = (2R)-3-phospho-glyceroyl phosphate + ADP. The protein operates within carbohydrate degradation; glycolysis; pyruvate from D-glyceraldehyde 3-phosphate: step 2/5. Catalyzes one of the two ATP producing reactions in the glycolytic pathway via the reversible conversion of 1,3-diphosphoglycerate to 3-phosphoglycerate. Both L- and D- forms of purine and pyrimidine nucleotides can be used as substrates, but the activity is much lower on pyrimidines. Negatively regulates the biosynthesis of acetyl-CoA from pyruvate in the mitochondrion. The chain is Phosphoglycerate kinase (PGK1) from Saccharomyces cerevisiae (strain ATCC 204508 / S288c) (Baker's yeast).